A 509-amino-acid chain; its full sequence is ATP synthase subunit alpha (509 aa).

ATP is bound at residue 169 to 176; that stretch reads GDRQTGKT.

It belongs to the ATPase alpha/beta chains family. As to quaternary structure, F-type ATPases have 2 components, CF(1) - the catalytic core - and CF(0) - the membrane proton channel. CF(1) has five subunits: alpha(3), beta(3), gamma(1), delta(1), epsilon(1). CF(0) has four main subunits: a(1), b(1), b'(1) and c(9-12).

The protein localises to the cellular chromatophore membrane. The catalysed reaction is ATP + H2O + 4 H(+)(in) = ADP + phosphate + 5 H(+)(out). Functionally, produces ATP from ADP in the presence of a proton gradient across the membrane. The alpha chain is a regulatory subunit. The sequence is that of ATP synthase subunit alpha from Rhodobacter capsulatus (Rhodopseudomonas capsulata).